Here is a 52-residue protein sequence, read N- to C-terminus: Dibenzothiophene metabolism operon protein NahQ/DoxH (52 aa).

Its pathway is aromatic compound metabolism; naphthalene degradation. Its function is as follows. May be involved in the conversion of 2-hydroxy-4-(2'-oxo-3,5-cyclohexadienyl)-buta-2,4-dienoate to cis-O-hydroxybenzylidenepyruvate. DoxH and DoxJ encode different enzymes that may have interchangeable functions. In Pseudomonas putida (Arthrobacter siderocapsulatus), this protein is Dibenzothiophene metabolism operon protein NahQ/DoxH (nahQ).